We begin with the raw amino-acid sequence, 165 residues long: Nucleotide-binding protein Ccon26_01810 (165 aa).

Belongs to the YajQ family.

In terms of biological role, nucleotide-binding protein. This is Nucleotide-binding protein Ccon26_01810 from Campylobacter concisus (strain 13826).